A 235-amino-acid chain; its full sequence is TIR domain-containing adapter molecule 2 (235 aa).

The interval 1 to 39 (MGIGKSKINSCPLSLSWGKRHSVDTSPGYHESDSKKSED) is disordered. A lipid anchor (N-myristoyl glycine) is attached at Gly2. Ser16 bears the Phosphoserine; by PKC/PRKCE mark. The segment covering 30-39 (HESDSKKSED) has biased composition (basic and acidic residues). In terms of domain architecture, TIR spans 73-229 (AEEEVFLKFV…TIWKETRNMV (157 aa)). Tyr167 is modified (phosphotyrosine).

Homodimer. Interacts with TLR4, TICAM1, IRF3 and IRF7 in response to LPS. Interacts with IL1R1, IL1RAP, IRAK2, IRAK3 and TRAF6. Interacts with protein kinase-inactive mutants of IRAK1 and IRAK4. Isoform 1 interacts with isoform 2; the interaction occurs in late endosomes and disrupts the interaction between isoform 1 and TICAM1. Interacts with MYD88; the interaction decreases after IL-18 stimulation in a time-dependent manner. Interacts with IL18R1 and IL18RAP. Interacts with TLR2. Interacts with RAB11FIP2. Post-translationally, phosphorylated by PRKCE in response to LPS. Phosphorylation is essential for its function. It is depleted from the membrane upon phosphorylation. Tyrosine phosphorylation is inhibited by phosphatase PTPN4. Isoform 1 is myristoylated. Required for membrane association which is critical for its ability to initiate efficient signaling. As to expression, expressed in spleen, prostate, testis, uterus, small intestine, colon, peripheral blood leukocytes, heart, placenta, lung, liver, skeletal muscle, and pancreas Isoform 2 is ubiquitously expressed (at lower levels than isoform 1).

It is found in the cytoplasm. The protein localises to the golgi apparatus. Its subcellular location is the cell membrane. It localises to the endoplasmic reticulum. The protein resides in the early endosome membrane. It is found in the late endosome membrane. The protein localises to the cell projection. Its subcellular location is the phagocytic cup. In terms of biological role, functions as a sorting adapter in different signaling pathways to facilitate downstream signaling leading to type I interferon induction. In TLR4 signaling, physically bridges TLR4 and TICAM1 and functionally transmits signal to TICAM1 in early endosomes after endocytosis of TLR4. In TLR2 signaling, physically bridges TLR2 and MYD88 and is required for the TLR2-dependent movement of MYD88 to endosomes following ligand engagement. Involved in IL-18 signaling and is proposed to function as a sorting adapter for MYD88 in IL-18 signaling during adaptive immune response. Forms a complex with RAB11FIP2 that is recruited to the phagosomes to promote the activation of the actin-regulatory GTPases RAC1 and CDC42 and subsequent phagocytosis of Gram-negative bacteria. Its function is as follows. Proposed to inhibit LPS-TLR4 signaling at the late endosome by interaction with isoform 1 thereby disrupting the association of isoform 1 with TICAM1. May be involved in TLR4 degradation in late endosomes. This Homo sapiens (Human) protein is TIR domain-containing adapter molecule 2 (TICAM2).